The chain runs to 315 residues: ATP synthase gamma chain (315 aa).

It belongs to the ATPase gamma chain family. As to quaternary structure, F-type ATPases have 2 components, CF(1) - the catalytic core - and CF(0) - the membrane proton channel. CF(1) has five subunits: alpha(3), beta(3), gamma(1), delta(1), epsilon(1). CF(0) has three main subunits: a, b and c.

It is found in the cellular thylakoid membrane. Functionally, produces ATP from ADP in the presence of a proton gradient across the membrane. The gamma chain is believed to be important in regulating ATPase activity and the flow of protons through the CF(0) complex. This chain is ATP synthase gamma chain, found in Nostoc sp. (strain PCC 7120 / SAG 25.82 / UTEX 2576).